A 248-amino-acid polypeptide reads, in one-letter code: PF03932 family protein CutC (248 aa).

This sequence belongs to the CutC family. In terms of assembly, homodimer.

The protein resides in the cytoplasm. In Salmonella newport (strain SL254), this protein is PF03932 family protein CutC.